The sequence spans 1373 residues: DNA-directed RNA polymerase subunit beta (1373 aa).

This sequence belongs to the RNA polymerase beta chain family. The RNAP catalytic core consists of 2 alpha, 1 beta, 1 beta' and 1 omega subunit. When a sigma factor is associated with the core the holoenzyme is formed, which can initiate transcription.

The enzyme catalyses RNA(n) + a ribonucleoside 5'-triphosphate = RNA(n+1) + diphosphate. Its function is as follows. DNA-dependent RNA polymerase catalyzes the transcription of DNA into RNA using the four ribonucleoside triphosphates as substrates. The polypeptide is DNA-directed RNA polymerase subunit beta (Rickettsia massiliae (strain Mtu5)).